The sequence spans 236 residues: MSNSITLEERGESFQPRPITSFVRREGRMTPAQKKALEHLWPRYGIDLGTGPLNLAAIFNRQAERILEIGFGNGESLLQQARAAPERDFLGIEVYRPGIGHLLLRLKAEGLENIRVIHGDAWEVLQRALPNPSLDGVQIFFPDPWPKKRHHKRRLIQPSFVDLLERKIKPGGWFHLATDWQDYAEQIKAVLSQHAGFNQLTNEGQSTQRPRTKFEARGQQQGHGVWDLRFKRSVDS.

S-adenosyl-L-methionine is bound by residues Glu-68, Glu-93, Asp-120, and Asp-143. Asp-143 is an active-site residue. Residues Lys-147, Asp-179, and Thr-212–Glu-215 contribute to the substrate site.

This sequence belongs to the class I-like SAM-binding methyltransferase superfamily. TrmB family.

The catalysed reaction is guanosine(46) in tRNA + S-adenosyl-L-methionine = N(7)-methylguanosine(46) in tRNA + S-adenosyl-L-homocysteine. It participates in tRNA modification; N(7)-methylguanine-tRNA biosynthesis. Functionally, catalyzes the formation of N(7)-methylguanine at position 46 (m7G46) in tRNA. The polypeptide is tRNA (guanine-N(7)-)-methyltransferase (Nitrosococcus oceani (strain ATCC 19707 / BCRC 17464 / JCM 30415 / NCIMB 11848 / C-107)).